We begin with the raw amino-acid sequence, 439 residues long: MASDGSPSCCSSEPCAGASGCATASFCPTNTTCLPNTCSTSRCQTPSFLCRASLPACCLSPCYLAGGCNSPCLVGSCAWCEEGSFNSNEKETMQFLNDRLASYLERVRSLEENNAELECRIREQCEPNAPLVCPDYQRYFDTIEELQQKILCTKAENSRLAVQVDNCKLAADDFRSKYESELSLRQLVENDITGLRGILGELTLCKSDLEAHVESMKDDLICLKKGHEEEVNLLREQLGDRLSVELDTAPTVDLNKVLDEMRCQYERVLANNRRDAEEWFAAQTEELNQQQKSSAEQLEGCQTEMLELKRKANTLEIELQAQQTLTESLECTVAETEAQYSTQLAQMQCLIDSVEHQLAEIRCDLERQNQEYQVLLDTKARLECEINTYRGLLEKEDSRLPCNPGSGAPMPNSTCEPCSNSMCEPCSAYVICTVENCCA.

The tract at residues 1–89 is head; that stretch reads MASDGSPSCC…CEEGSFNSNE (89 aa). The IF rod domain maps to 89–400; the sequence is EKETMQFLND…GLLEKEDSRL (312 aa). Residues 90-124 form a coil 1A region; it reads KETMQFLNDRLASYLERVRSLEENNAELECRIREQ. Positions 125–135 are linker 1; it reads CEPNAPLVCPD. Positions 136–236 are coil 1B; that stretch reads YQRYFDTIEE…HEEEVNLLRE (101 aa). The interval 237 to 252 is linker 12; it reads QLGDRLSVELDTAPTV. The interval 253-396 is coil 2; that stretch reads DLNKVLDEMR…NTYRGLLEKE (144 aa). Residues 397–439 form a tail region; the sequence is DSRLPCNPGSGAPMPNSTCEPCSNSMCEPCSAYVICTVENCCA.

It belongs to the intermediate filament family. As to quaternary structure, heterotetramer of two type I and two type II keratins.

Its function is as follows. May play a role in late hair differentiation. The chain is Keratin, type I cytoskeletal 40 (Krt40) from Mus musculus (Mouse).